Here is a 435-residue protein sequence, read N- to C-terminus: Probable E3 ubiquitin-protein ligase makorin-1 (435 aa).

C3H1-type zinc fingers lie at residues Trp-18–Thr-45 and Lys-48–Pro-75. Residues Leu-81 to Pro-109 are disordered. Positions Asp-99–Val-108 are enriched in pro residues. The C3H1-type 3 zinc finger occupies Gln-155 to Val-182. Residues Cys-183–His-210 form a makorin-type Cys-His region. An RING-type zinc finger spans residues Cys-228–Arg-282. A C3H1-type 4 zinc finger spans residues Gly-311 to Pro-340. The segment at Glu-345–Trp-369 is disordered.

As to expression, weakly expressed in adult brain, heart and kidney.

The catalysed reaction is S-ubiquitinyl-[E2 ubiquitin-conjugating enzyme]-L-cysteine + [acceptor protein]-L-lysine = [E2 ubiquitin-conjugating enzyme]-L-cysteine + N(6)-ubiquitinyl-[acceptor protein]-L-lysine.. Its pathway is protein modification; protein ubiquitination. E3 ubiquitin ligase catalyzing the covalent attachment of ubiquitin moieties onto substrate proteins. The polypeptide is Probable E3 ubiquitin-protein ligase makorin-1 (Seriola quinqueradiata (Five-ray yellowtail)).